A 600-amino-acid polypeptide reads, in one-letter code: DNA ligase (600 aa).

Residue Asp259 participates in ATP binding. Lys261 (N6-AMP-lysine intermediate) is an active-site residue. The ATP site is built by Arg266, Arg281, Glu311, Phe351, Arg428, and Lys434.

It belongs to the ATP-dependent DNA ligase family. Requires Mg(2+) as cofactor.

It carries out the reaction ATP + (deoxyribonucleotide)n-3'-hydroxyl + 5'-phospho-(deoxyribonucleotide)m = (deoxyribonucleotide)n+m + AMP + diphosphate.. DNA ligase that seals nicks in double-stranded DNA during DNA replication, DNA recombination and DNA repair. The chain is DNA ligase from Acidianus ambivalens (Desulfurolobus ambivalens).